We begin with the raw amino-acid sequence, 273 residues long: Histone H1.2 (273 aa).

Residues 1–63 (MSIEEENVPT…TKKKTTSSHP (63 aa)) are disordered. Ser-2 is subject to N-acetylserine. Ser-14 carries the phosphoserine modification. The segment covering 33–59 (GKSKKTTTAKATKKPVKAAAPTKKKTT) has biased composition (basic residues). The H15 domain maps to 61–130 (SHPTYEEMIK…KVKASFKIPS (70 aa)). Residues Lys-156 and Lys-165 each participate in a glycyl lysine isopeptide (Lys-Gly) (interchain with G-Cter in ubiquitin) cross-link. Composition is skewed to low complexity over residues 193 to 216 (KVTAAKPKSKSVAAVSKTKAVAAK) and 237 to 256 (KKVAAPAKKVAVTKKAPAKS). The segment at 193-273 (KVTAAKPKSK…KRASTRKAKK (81 aa)) is disordered. Residues 257-273 (VKVKSPAKRASTRKAKK) are compositionally biased toward basic residues.

This sequence belongs to the histone H1/H5 family.

It localises to the nucleus. The protein resides in the chromosome. Its function is as follows. Histones H1 are necessary for the condensation of nucleosome chains into higher-order structures. The polypeptide is Histone H1.2 (Arabidopsis thaliana (Mouse-ear cress)).